The sequence spans 665 residues: tRNA 5-methylaminomethyl-2-thiouridine biosynthesis bifunctional protein MnmC (665 aa).

The tRNA (mnm(5)s(2)U34)-methyltransferase stretch occupies residues 1–243 (MSQTSLHHAR…KWAMLAGERV (243 aa)). An FAD-dependent cmnm(5)s(2)U34 oxidoreductase region spans residues 268–665 (IGGGIASAMT…RKLLKGKPLN (398 aa)).

The protein in the N-terminal section; belongs to the methyltransferase superfamily. tRNA (mnm(5)s(2)U34)-methyltransferase family. This sequence in the C-terminal section; belongs to the DAO family. Requires FAD as cofactor.

Its subcellular location is the cytoplasm. The enzyme catalyses 5-aminomethyl-2-thiouridine(34) in tRNA + S-adenosyl-L-methionine = 5-methylaminomethyl-2-thiouridine(34) in tRNA + S-adenosyl-L-homocysteine + H(+). Its function is as follows. Catalyzes the last two steps in the biosynthesis of 5-methylaminomethyl-2-thiouridine (mnm(5)s(2)U) at the wobble position (U34) in tRNA. Catalyzes the FAD-dependent demodification of cmnm(5)s(2)U34 to nm(5)s(2)U34, followed by the transfer of a methyl group from S-adenosyl-L-methionine to nm(5)s(2)U34, to form mnm(5)s(2)U34. This chain is tRNA 5-methylaminomethyl-2-thiouridine biosynthesis bifunctional protein MnmC, found in Aeromonas salmonicida (strain A449).